The following is a 294-amino-acid chain: tRNA dimethylallyltransferase (294 aa).

10-17 (GPTAVGKT) contributes to the ATP binding site. Residue 12-17 (TAVGKT) coordinates substrate. Positions 35–38 (DSQQ) are interaction with substrate tRNA.

The protein belongs to the IPP transferase family. As to quaternary structure, monomer. Mg(2+) is required as a cofactor.

The catalysed reaction is adenosine(37) in tRNA + dimethylallyl diphosphate = N(6)-dimethylallyladenosine(37) in tRNA + diphosphate. Functionally, catalyzes the transfer of a dimethylallyl group onto the adenine at position 37 in tRNAs that read codons beginning with uridine, leading to the formation of N6-(dimethylallyl)adenosine (i(6)A). The chain is tRNA dimethylallyltransferase from Streptococcus mutans serotype c (strain ATCC 700610 / UA159).